Consider the following 425-residue polypeptide: Histidine--tRNA ligase 1 (425 aa).

This sequence belongs to the class-II aminoacyl-tRNA synthetase family. Homodimer.

It is found in the cytoplasm. The enzyme catalyses tRNA(His) + L-histidine + ATP = L-histidyl-tRNA(His) + AMP + diphosphate + H(+). The polypeptide is Histidine--tRNA ligase 1 (Bacillus thuringiensis subsp. konkukian (strain 97-27)).